The following is a 201-amino-acid chain: Large ribosomal subunit protein uL4 (201 aa).

The interval 45–67 (AQKTRAEVTGSGKKPWRQKGTGR) is disordered.

Belongs to the universal ribosomal protein uL4 family. Part of the 50S ribosomal subunit.

In terms of biological role, one of the primary rRNA binding proteins, this protein initially binds near the 5'-end of the 23S rRNA. It is important during the early stages of 50S assembly. It makes multiple contacts with different domains of the 23S rRNA in the assembled 50S subunit and ribosome. Functionally, forms part of the polypeptide exit tunnel. This is Large ribosomal subunit protein uL4 from Yersinia enterocolitica serotype O:8 / biotype 1B (strain NCTC 13174 / 8081).